The chain runs to 130 residues: Small ribosomal subunit protein uS9 (130 aa).

The segment at serine 108–arginine 130 is disordered. The span at valine 116 to arginine 130 shows a compositional bias: basic residues.

This sequence belongs to the universal ribosomal protein uS9 family.

The sequence is that of Small ribosomal subunit protein uS9 from Cellvibrio japonicus (strain Ueda107) (Pseudomonas fluorescens subsp. cellulosa).